The sequence spans 638 residues: ATP-dependent zinc metalloprotease FtsH (638 aa).

The Cytoplasmic segment spans residues 1–4 (MNNQ). A helical membrane pass occupies residues 5 to 25 (GKNIIVWAVIFVFVILLFNVF). Residues 26–103 (QSDGLLSSKN…VVPPETRMNT (78 aa)) lie on the Periplasmic side of the membrane. The helical transmembrane segment at 104-124 (FLSFLISWFPMLLLIGVWVFF) threads the bilayer. At 125 to 638 (MRQMHGGGKA…PIKAKKEDKS (514 aa)) the chain is on the cytoplasmic side. An ATP-binding site is contributed by 195–202 (GPPGTGKT). His-417 lines the Zn(2+) pocket. The active site involves Glu-418. 2 residues coordinate Zn(2+): His-421 and Asp-495. The tract at residues 523–544 (SASEDMYTNRNSSSDRSESTSE) is disordered.

In the central section; belongs to the AAA ATPase family. It in the C-terminal section; belongs to the peptidase M41 family. In terms of assembly, homohexamer. Zn(2+) is required as a cofactor.

Its subcellular location is the cell inner membrane. Acts as a processive, ATP-dependent zinc metallopeptidase for both cytoplasmic and membrane proteins. Plays a role in the quality control of integral membrane proteins. The protein is ATP-dependent zinc metalloprotease FtsH of Rickettsia bellii (strain RML369-C).